Reading from the N-terminus, the 296-residue chain is Elongation factor Ts (296 aa).

The involved in Mg(2+) ion dislocation from EF-Tu stretch occupies residues 79 to 82 (TDFV).

It belongs to the EF-Ts family.

The protein localises to the cytoplasm. In terms of biological role, associates with the EF-Tu.GDP complex and induces the exchange of GDP to GTP. It remains bound to the aminoacyl-tRNA.EF-Tu.GTP complex up to the GTP hydrolysis stage on the ribosome. In Paracoccus denitrificans (strain Pd 1222), this protein is Elongation factor Ts.